The sequence spans 373 residues: MPAVTFTVLKRDRSTGARLGRLTTPHGTIETPVFMPVGTQATVKTMTPEEVAGLGAEIILANTYHLYLRPGADIIREAGGLHRFMHWERPILTDSGGFQVFSLADLREISDEGVTFRSHLDGSIHFLGPAESMAVQEALGSDIAMAFDECVAYPASPEEVAAGVERTSRWAEACLRAHRREDQAVFGIIQGGTIPELRRRSAREITALDFPGYGIGGLSVGEPKELMYSILEELQGYLPENKPRYLMGVGSPDCLIEGVKRGVDMFDCVLPTRIARNGTVMTTYGKLVVRNAAYARDFRPLDPECDCYTCRNYTRAYIRHLLKAEEILGLRLTTIHNLHFLIKLMQRLRQAIAEGRLEEVAADFYERYNSGKI.

Asp94 functions as the Proton acceptor in the catalytic mechanism. Substrate is bound by residues 94–98 (DSGGF), Asp148, Gln190, and Gly217. The tract at residues 248-254 (GVGSPDC) is RNA binding. The active-site Nucleophile is the Asp267. The interval 272–276 (TRIAR) is RNA binding; important for wobble base 34 recognition. Zn(2+)-binding residues include Cys305, Cys307, Cys310, and His336.

The protein belongs to the queuine tRNA-ribosyltransferase family. In terms of assembly, homodimer. Within each dimer, one monomer is responsible for RNA recognition and catalysis, while the other monomer binds to the replacement base PreQ1. Requires Zn(2+) as cofactor.

It carries out the reaction 7-aminomethyl-7-carbaguanine + guanosine(34) in tRNA = 7-aminomethyl-7-carbaguanosine(34) in tRNA + guanine. It functions in the pathway tRNA modification; tRNA-queuosine biosynthesis. In terms of biological role, catalyzes the base-exchange of a guanine (G) residue with the queuine precursor 7-aminomethyl-7-deazaguanine (PreQ1) at position 34 (anticodon wobble position) in tRNAs with GU(N) anticodons (tRNA-Asp, -Asn, -His and -Tyr). Catalysis occurs through a double-displacement mechanism. The nucleophile active site attacks the C1' of nucleotide 34 to detach the guanine base from the RNA, forming a covalent enzyme-RNA intermediate. The proton acceptor active site deprotonates the incoming PreQ1, allowing a nucleophilic attack on the C1' of the ribose to form the product. After dissociation, two additional enzymatic reactions on the tRNA convert PreQ1 to queuine (Q), resulting in the hypermodified nucleoside queuosine (7-(((4,5-cis-dihydroxy-2-cyclopenten-1-yl)amino)methyl)-7-deazaguanosine). This Moorella thermoacetica (strain ATCC 39073 / JCM 9320) protein is Queuine tRNA-ribosyltransferase.